The following is a 309-amino-acid chain: Carbamate kinase-like protein (309 aa).

The interval 125–144 (NKPVGPFYNTEETARSANPN) is disordered.

This sequence belongs to the carbamate kinase family.

This is Carbamate kinase-like protein from Mycoplasma pneumoniae (strain ATCC 29342 / M129 / Subtype 1) (Mycoplasmoides pneumoniae).